Here is a 338-residue protein sequence, read N- to C-terminus: Glycerol-3-phosphate dehydrogenase [NAD(P)+] (338 aa).

Residues Ser-14, Tyr-15, His-35, and Lys-109 each contribute to the NADPH site. Positions 109, 138, and 140 each coordinate sn-glycerol 3-phosphate. Ala-142 lines the NADPH pocket. Residues Lys-194, Asp-247, Ser-257, Arg-258, and Asn-259 each contribute to the sn-glycerol 3-phosphate site. Lys-194 (proton acceptor) is an active-site residue. Residue Arg-258 participates in NADPH binding. 2 residues coordinate NADPH: Val-282 and Glu-284.

The protein belongs to the NAD-dependent glycerol-3-phosphate dehydrogenase family.

The protein localises to the cytoplasm. The catalysed reaction is sn-glycerol 3-phosphate + NAD(+) = dihydroxyacetone phosphate + NADH + H(+). The enzyme catalyses sn-glycerol 3-phosphate + NADP(+) = dihydroxyacetone phosphate + NADPH + H(+). The protein operates within membrane lipid metabolism; glycerophospholipid metabolism. In terms of biological role, catalyzes the reduction of the glycolytic intermediate dihydroxyacetone phosphate (DHAP) to sn-glycerol 3-phosphate (G3P), the key precursor for phospholipid synthesis. The sequence is that of Glycerol-3-phosphate dehydrogenase [NAD(P)+] from Shewanella frigidimarina (strain NCIMB 400).